A 136-amino-acid polypeptide reads, in one-letter code: MEGDAPVIAANPLEKNTDPMVALQKVIKESLAVQGVARGLHETVKALDKRTARLCVLASNCDEPNFVRLVKALATEHNIPLIEVPDNKALGEWAGLCKLDKDLAARKVVACSTLVIKTFGKESDDYKFLMEYISKQ.

The protein belongs to the eukaryotic ribosomal protein eS12 family.

This is Small ribosomal subunit protein eS12 (rps12) from Dictyostelium discoideum (Social amoeba).